Consider the following 416-residue polypeptide: Succinate--CoA ligase [ADP-forming] subunit beta (416 aa).

The N-terminal 14 residues, 1–14, are a transit peptide targeting the hydrogenosome; that stretch reads MLRMAPKTVGAVRN. Residues K64, 71–73, and E132 contribute to the ATP site; that span reads GRG. 2 residues coordinate Mg(2+): N224 and D242. Substrate-binding positions include N293 and 350–352; that span reads GIM.

Belongs to the succinate/malate CoA ligase beta subunit family. Heterodimer of an alpha and a beta subunit. It depends on Mg(2+) as a cofactor.

The protein localises to the hydrogenosome. The catalysed reaction is succinate + ATP + CoA = succinyl-CoA + ADP + phosphate. The protein operates within carbohydrate metabolism; tricarboxylic acid cycle; succinate from succinyl-CoA (ligase route): step 1/1. In terms of biological role, succinyl-CoA synthetase functions in the citric acid cycle (TCA), coupling the hydrolysis of succinyl-CoA to the synthesis of ATP and thus represents the only step of substrate-level phosphorylation in the TCA. The beta subunit provides nucleotide specificity of the enzyme and binds the substrate succinate, while the binding sites for coenzyme A and phosphate are found in the alpha subunit. This chain is Succinate--CoA ligase [ADP-forming] subunit beta (SCSb), found in Blastocystis sp. subtype 1 (strain ATCC 50177 / NandII).